The primary structure comprises 898 residues: Interleukin enhancer-binding factor 3 (898 aa).

Residues 5-378 (RIFVNDDRHV…PMKRPMEEDG (374 aa)) form the DZF domain. The interval 52-85 (QEKGNSELSEAENMDTPPDDESKEGAGEQKAEHM) is disordered. The segment covering 60-73 (SEAENMDTPPDDES) has biased composition (acidic residues). Thr-67 carries the phosphothreonine modification. A compositionally biased stretch (basic and acidic residues) spans 74–85 (KEGAGEQKAEHM). Lys-100 carries the N6-acetyllysine modification. The residue at position 188 (Thr-188) is a Phosphothreonine; by PKR. Position 190 is a phosphoserine (Ser-190). Lys-297 is covalently cross-linked (Glycyl lysine isopeptide (Lys-Gly) (interchain with G-Cter in ubiquitin)). Position 315 is a phosphothreonine; by PKR (Thr-315). Lys-348 is covalently cross-linked (Glycyl lysine isopeptide (Lys-Gly) (interchain with G-Cter in SUMO1)). Residues 363–402 (TTYAITPMKRPMEEDGEEKSPSKKKKKIQKKEEKADPPQA) are disordered. The Bipartite nuclear localization signal signature appears at 371–389 (KRPMEEDGEEKSPSKKKKK). The span at 372–383 (RPMEEDGEEKSP) shows a compositional bias: basic and acidic residues. Phosphoserine occurs at positions 382 and 384. Residue Lys-396 forms a Glycyl lysine isopeptide (Lys-Gly) (interchain with G-Cter in SUMO2) linkage. The DRBM 1 domain maps to 398 to 467 (DPPQAMNALM…AVKVLQDMGL (70 aa)). N6-acetyllysine is present on Lys-460. Disordered stretches follow at residues 466 to 495 (GLPT…IVAP) and 505 to 524 (PSSV…LTKH). The segment covering 472 to 481 (EGRDSSKGED) has biased composition (basic and acidic residues). 4 positions are modified to phosphoserine: Ser-476, Ser-477, Ser-482, and Ser-486. Residue Lys-489 forms a Glycyl lysine isopeptide (Lys-Gly) (interchain with G-Cter in SUMO2) linkage. The region spanning 524–590 (HGKNPVMELN…ALAALEKLFP (67 aa)) is the DRBM 2 domain. At Thr-592 the chain carries Phosphothreonine. Residues 609 to 898 (RGGPKFAAKP…TEHSMNYQYR (290 aa)) are interaction with PRMT1. Disordered regions lie at residues 631–661 (NEVP…GGAN) and 719–898 (QGDS…YQYR). Over residues 644–661 (RGGNIRGRGRGRGFGGAN) the composition is skewed to gly residues. Low complexity-rich tracts occupy residues 745-769 (SYSS…SSYG), 783-794 (GSYSSYSNSYNS), and 802-812 (DYSYDSKFNYS). 4 positions are modified to phosphoserine: Ser-794, Ser-812, Ser-814, and Ser-818. Gly residues predominate over residues 813–822 (GSGGRSGGNS). Residues 823-834 (YGSSGSSSYNTG) are compositionally biased toward low complexity. Residues 835-845 (SHGGYGTGSGG) are compositionally biased toward gly residues. Low complexity predominate over residues 846–886 (SSSYQGKQGGYSSQSNYSSPGSSQSYSGPASSYQSSQGGYS).

Identified in a IGF2BP1-dependent mRNP granule complex containing untranslated mRNAs. Interacts with FUS and SMN. Interacts (via C-terminus) with PRMT1. Forms a complex with ILF2. Can also bind to PRKDC/XRCC7: this may stabilize the interaction of PRKDC/XRCC7 and the heterodimeric complex of XRCC6/KU70 and XRCC5/KU80. Forms a heteromeric complex with ZNF346 and ILF3. Found in a nuclear export complex with XPO5, ILF3, Ran and double-stranded RNA or double-stranded minihelix VA1 RNA. Found in a nuclear export complex with XPO5, RAN, ILF3, ZNF346 and double-stranded RNA. Interacts with XPO5 and ZNF346. Forms a complex with ILF2, YLPM1, KHDRBS1, RBMX, NCOA5 and PPP1CA. Interacts with AGO1 and AGO2. Interacts with DHX36; this interaction occurs in a RNA-dependent manner. Interacts with ELAVL1; this interaction occurs in a RNA-dependent manner. Interacts with HAVCR2; this interaction promotes ILF3 ubiquitination and subsequent degradation. Phosphorylated at Thr-188 and Thr-315 by PKR in response to RNA viruses. This phosphorylation results in the dissociation of ILF2 from the ILF2-ILF3 complex resulting in a cytoplasmic sequestration of ILF3 where it can bind to viral RNAs and impede viral replication. In terms of processing, methylated by protein arginine N-methyltransferase 1. Ubiquitous. Expressed at high levels in the thymus, testis, ovary and at lower levelss in the spleen.

It is found in the nucleus. The protein resides in the nucleolus. The protein localises to the cytoplasm. In terms of biological role, RNA-binding protein that plays an essential role in the biogenesis of circular RNAs (circRNAs) which are produced by back-splicing circularization of pre-mRNAs. Within the nucleus, promotes circRNAs processing by stabilizing the regulatory elements residing in the flanking introns of the circularized exons. Plays thereby a role in the back-splicing of a subset of circRNAs. As a consequence, participates in a wide range of transcriptional and post-transcriptional processes. Binds to poly-U elements and AU-rich elements (AREs) in the 3'-UTR of target mRNAs. Upon viral infection, ILF3 accumulates in the cytoplasm and participates in the innate antiviral response. Mechanistically, ILF3 becomes phosphorylated and activated by the double-stranded RNA-activated protein kinase/PKR which releases ILF3 from cellular mature circRNAs. In turn, unbound ILF3 molecules are able to interact with and thus inhibit viral mRNAs. The protein is Interleukin enhancer-binding factor 3 (Ilf3) of Mus musculus (Mouse).